We begin with the raw amino-acid sequence, 695 residues long: Putative ATP-dependent DNA helicase R568 (695 aa).

One can recognise a UvrD-like helicase ATP-binding domain in the interval 86-499 (KFSEEQIKYI…FRNEEIFDSN (414 aa)). ATP is bound at residue 107–114 (ACAGSGKT).

This sequence belongs to the helicase family. UvrD subfamily.

It catalyses the reaction Couples ATP hydrolysis with the unwinding of duplex DNA by translocating in the 3'-5' direction.. The catalysed reaction is ATP + H2O = ADP + phosphate + H(+). ATP-dependent DNA helicase. This is Putative ATP-dependent DNA helicase R568 from Acanthamoeba polyphaga mimivirus (APMV).